The chain runs to 403 residues: Putative gustatory receptor 98b (403 aa).

Over 1–11 (MVAQKSRLLAR) the chain is Cytoplasmic. The helical transmembrane segment at 12–32 (AFPYLDIFSVFALTPPPQSFG) threads the bilayer. The Extracellular portion of the chain corresponds to 33-48 (HTPHRRLRWYLMTGYV). The helical transmembrane segment at 49 to 69 (FYATAILATVFIVSYFNIIAI) threads the bilayer. Residues 70–83 (DEEVLEYNVSDFTR) are Cytoplasmic-facing. The chain crosses the membrane as a helical span at residues 84-104 (VMGNIQKSLYSIMAIANHLNM). Residues 105-144 (LINYRRLGGIYKDIADLEMDMDEASQCFGGQRQRFSFRFR) are Extracellular-facing. A helical membrane pass occupies residues 145-165 (MALCVGVWMILMVGSMPRLTM). Topologically, residues 166–191 (TAMGPFVSTLLKILTEFVMIMQQLKS) are cytoplasmic. Residues 192 to 212 (LEYCVFVLIIYELVLRLRRTL) form a helical membrane-spanning segment. Over 213–259 (SQLQEEFQDCEQQDMLQALCVALKRNQLLLGRIWRLEGDVGSYFTPT) the chain is Extracellular. The helical transmembrane segment at 260–280 (MLLLFLYNGLTILHMVNWAYI) threads the bilayer. Residues 281-365 (NKFLYDSCCQ…LRFTCGGLFD (85 aa)) are Cytoplasmic-facing. The helical transmembrane segment at 366-386 (INLKYFGGLLVTIFGYIIILI) threads the bilayer. The Extracellular segment spans residues 387–403 (QFKVQAIAANRYKKVVN).

Belongs to the insect chemoreceptor superfamily. Gustatory receptor (GR) family. Gr2a subfamily.

Its subcellular location is the cell membrane. In terms of biological role, probable gustatory receptor which mediates acceptance or avoidance behavior, depending on its substrates. The sequence is that of Putative gustatory receptor 98b (Gr98b) from Drosophila melanogaster (Fruit fly).